The chain runs to 67 residues: MRCVPVFIILLLLSPSAPSVDAHPKTKDDVPLASFHDDAKRTLQRLWIKALCCYGYRFCCPIFGKGK.

Residues 1–22 (MRCVPVFIILLLLSPSAPSVDA) form the signal peptide. A propeptide spanning residues 23-48 (HPKTKDDVPLASFHDDAKRTLQRLWI) is cleaved from the precursor. A Phenylalanine amide modification is found at phenylalanine 63. Positions 65-67 (KGK) are excised as a propeptide.

It belongs to the conotoxin T superfamily. Contains 2 disulfide bonds that can be either 'C1-C3, C2-C4' or 'C1-C4, C2-C3', since these disulfide connectivities have been observed for conotoxins with cysteine framework V (for examples, see AC P0DQQ7 and AC P81755). Expressed by the venom duct.

It localises to the secreted. This is Conotoxin LiC33 from Conus lividus (Livid cone).